A 333-amino-acid chain; its full sequence is GTPase Obg (333 aa).

An Obg domain is found at Gly4 to Leu162. The region spanning Ala163–Asn332 is the OBG-type G domain. GTP-binding positions include Gly169–Ser176, Phe194–Lys198, Asp216–Gly219, Ser283–Asp286, and Ser313–Val315. Residues Ser176 and Thr196 each contribute to the Mg(2+) site.

It belongs to the TRAFAC class OBG-HflX-like GTPase superfamily. OBG GTPase family. As to quaternary structure, monomer. Mg(2+) serves as cofactor.

It localises to the cytoplasm. Its function is as follows. An essential GTPase which binds GTP, GDP and possibly (p)ppGpp with moderate affinity, with high nucleotide exchange rates and a fairly low GTP hydrolysis rate. Plays a role in control of the cell cycle, stress response, ribosome biogenesis and in those bacteria that undergo differentiation, in morphogenesis control. This is GTPase Obg from Flavobacterium johnsoniae (strain ATCC 17061 / DSM 2064 / JCM 8514 / BCRC 14874 / CCUG 350202 / NBRC 14942 / NCIMB 11054 / UW101) (Cytophaga johnsonae).